The chain runs to 673 residues: Protein kinase ORF74 (673 aa).

The Protein kinase domain maps to 128-404; that stretch reads TDTDEAVARG…ARELLVYPRY (277 aa). D252 serves as the catalytic Proton acceptor. Residues 340-364 are disordered; the sequence is MDNDALDSRRTGRDGDPVNPEGFGT. Residues 345-355 are compositionally biased toward basic and acidic residues; that stretch reads LDSRRTGRDGD.

It belongs to the protein kinase superfamily. Ser/Thr protein kinase family.

The enzyme catalyses L-seryl-[protein] + ATP = O-phospho-L-seryl-[protein] + ADP + H(+). The catalysed reaction is L-threonyl-[protein] + ATP = O-phospho-L-threonyl-[protein] + ADP + H(+). In Ictalurid herpesvirus 1 (strain Auburn) (IcHV-1), this protein is Protein kinase ORF74 (ORF74).